A 142-amino-acid chain; its full sequence is MKLSAEDKHNVKTTWDHIKGHEEALGAEALFRMFTSLPATRTYFPAKDLSEGSSFLHSHGKKVMGALSNAVAHIDDIDAALCKLSDKHAQDLMVDPANFPKLAHNILVVMGIHLKAHLTYPVHCSVDKFLDVVGHVLTSKYR.

The 141-residue stretch at 2 to 142 folds into the Globin domain; that stretch reads KLSAEDKHNV…VGHVLTSKYR (141 aa). His59 is a binding site for O2. Residue His88 coordinates heme b.

The protein belongs to the globin family. Heterotetramer of two alpha chains and two beta chains. Red blood cells.

Involved in oxygen transport from the lung to the various peripheral tissues. This Taricha granulosa (Roughskin newt) protein is Hemoglobin subunit alpha (HBA).